We begin with the raw amino-acid sequence, 439 residues long: Na(+)/H(+) antiporter NhaA 1 (439 aa).

The next 11 membrane-spanning stretches (helical) occupy residues 14 to 34, 60 to 80, 98 to 118, 127 to 147, 156 to 176, 179 to 199, 213 to 233, 303 to 323, 335 to 355, 375 to 395, and 408 to 428; these read ITGG…ANLA, ISLH…FIGL, ALPL…YYFF, GWGI…AMVG, IFLS…IAIF, EQIF…LAVA, IGLI…TIAG, HPIS…GVIV, IVLG…FLFA, IIGT…ISDL, and VAVL…LISA.

The protein belongs to the NhaA Na(+)/H(+) (TC 2.A.33) antiporter family.

The protein resides in the cell inner membrane. It catalyses the reaction Na(+)(in) + 2 H(+)(out) = Na(+)(out) + 2 H(+)(in). In terms of biological role, na(+)/H(+) antiporter that extrudes sodium in exchange for external protons. The polypeptide is Na(+)/H(+) antiporter NhaA 1 (Psychromonas ingrahamii (strain DSM 17664 / CCUG 51855 / 37)).